We begin with the raw amino-acid sequence, 473 residues long: Tyrosine phenol-lyase (473 aa).

K257 is subject to N6-(pyridoxal phosphate)lysine.

The protein belongs to the beta-eliminating lyase family. Homotetramer. Pyridoxal 5'-phosphate serves as cofactor.

The catalysed reaction is L-tyrosine + H2O = phenol + pyruvate + NH4(+). The sequence is that of Tyrosine phenol-lyase from Intrasporangium calvum (strain ATCC 23552 / DSM 43043 / JCM 3097 / NBRC 12989 / NCIMB 10167 / NRRL B-3866 / 7 KIP).